A 332-amino-acid chain; its full sequence is Fructose-1,6-bisphosphatase class 1 (332 aa).

Glu89, Asp110, Leu112, and Asp113 together coordinate Mg(2+). Residues 113 to 116 (DGSS), Asn206, Tyr239, 257 to 259 (YLY), and Lys269 contribute to the substrate site. Glu275 contacts Mg(2+).

The protein belongs to the FBPase class 1 family. In terms of assembly, homotetramer. It depends on Mg(2+) as a cofactor.

The protein localises to the cytoplasm. The catalysed reaction is beta-D-fructose 1,6-bisphosphate + H2O = beta-D-fructose 6-phosphate + phosphate. The protein operates within carbohydrate biosynthesis; gluconeogenesis. The chain is Fructose-1,6-bisphosphatase class 1 from Citrobacter koseri (strain ATCC BAA-895 / CDC 4225-83 / SGSC4696).